The following is a 428-amino-acid chain: MLDIRLFRNEPDTVKSKIELRGDDPKVVDEILELDEQRRKLISATEEMKARRNKVSEEIALKKRNKENADDVIAEMRTLGDDIKEKDSQLNEIDNKMTGILCRIPNLISDDVPQGESDEDNVEVKKWGTPREFSFEPKAHWDIVEELKMADFDRAAKVSGARFVYLTNEGAQLERALMNYMITKHTTQHGYTEMMVPQLVNADTMYGTGQLPKFEEDLFKVEKEGLYTIPTAEVPLTNFYRNEIIQPGVLPEKFTGQSACFRSEAGSAGRDTRGLIRLHQFDKVEMVRFEQPEDSWNALEEMTTNAEAILEELGLPYRRVILCTGDIGFSASKTYDLEVWLPSYNDYKEISSCSNCTDFQARRANIRFKRDKAAKPELAHTLNGSGLAVGRTFAAIVENYQNEDGTVTIPEALVPFMGGKTQISKPVK.

Residue 231–233 (TAE) coordinates L-serine. 262-264 (RSE) is a binding site for ATP. Glu-285 lines the L-serine pocket. 349-352 (EISS) serves as a coordination point for ATP. Residue Ser-385 participates in L-serine binding.

Belongs to the class-II aminoacyl-tRNA synthetase family. Type-1 seryl-tRNA synthetase subfamily. As to quaternary structure, homodimer. The tRNA molecule binds across the dimer.

The protein localises to the cytoplasm. The enzyme catalyses tRNA(Ser) + L-serine + ATP = L-seryl-tRNA(Ser) + AMP + diphosphate + H(+). The catalysed reaction is tRNA(Sec) + L-serine + ATP = L-seryl-tRNA(Sec) + AMP + diphosphate + H(+). The protein operates within aminoacyl-tRNA biosynthesis; selenocysteinyl-tRNA(Sec) biosynthesis; L-seryl-tRNA(Sec) from L-serine and tRNA(Sec): step 1/1. Catalyzes the attachment of serine to tRNA(Ser). Is also able to aminoacylate tRNA(Sec) with serine, to form the misacylated tRNA L-seryl-tRNA(Sec), which will be further converted into selenocysteinyl-tRNA(Sec). The chain is Serine--tRNA ligase from Staphylococcus aureus (strain USA300).